Reading from the N-terminus, the 153-residue chain is Aspartate carbamoyltransferase regulatory chain (153 aa).

Zn(2+)-binding residues include cysteine 109, cysteine 114, cysteine 138, and cysteine 141.

This sequence belongs to the PyrI family. As to quaternary structure, contains catalytic and regulatory chains. Zn(2+) is required as a cofactor.

In terms of biological role, involved in allosteric regulation of aspartate carbamoyltransferase. The protein is Aspartate carbamoyltransferase regulatory chain of Shigella flexneri serotype 5b (strain 8401).